Here is a 152-residue protein sequence, read N- to C-terminus: Superoxide dismutase [Cu-Zn] 2 (152 aa).

Cu cation-binding residues include His45, His47, and His62. Cys56 and Cys145 are oxidised to a cystine. His62, His70, His79, and Asp82 together coordinate Zn(2+). Residue His119 participates in Cu cation binding.

It belongs to the Cu-Zn superoxide dismutase family. In terms of assembly, homodimer. Requires Cu cation as cofactor. Zn(2+) serves as cofactor.

The protein localises to the cytoplasm. The enzyme catalyses 2 superoxide + 2 H(+) = H2O2 + O2. Its function is as follows. Destroys radicals which are normally produced within the cells and which are toxic to biological systems. This Solanum lycopersicum (Tomato) protein is Superoxide dismutase [Cu-Zn] 2 (SODCC.5).